Here is a 630-residue protein sequence, read N- to C-terminus: Auxin efflux carrier component 2 (630 aa).

The Extracellular segment spans residues 1–6 (MITGRD). A helical transmembrane segment spans residues 7–27 (IYDVLAAIVPLYVAMFLAYGS). Residues 28–38 (VRWWGIFTPDQ) are Cytoplasmic-facing. Residues 39 to 59 (CSGINRFVAVFAVPLLSFHFI) traverse the membrane as a helical segment. Val51 lines the (indol-3-yl)acetate pocket. The Extracellular portion of the chain corresponds to 60–70 (STNDPYSMNYR). A helical membrane pass occupies residues 71 to 91 (FLAADSLQKLVILAALAVWHN). Over 92–108 (LLSRYRRNGGAAASLDW) the chain is Cytoplasmic. The helical transmembrane segment at 109-129 (TITLFSLSTLPNTLVMGIPLL) threads the bilayer. (indol-3-yl)acetate contacts are provided by Asn120 and Leu122. The Extracellular segment spans residues 130-139 (RAMYGDFSGS). A helical membrane pass occupies residues 140-160 (LMVQIVVLQSVIWYTLMLFLF). (indol-3-yl)acetate is bound at residue Tyr153. Over 161–490 (EYRGAKALIS…LIRNPNTYSS (330 aa)) the chain is Cytoplasmic. Positions 317 to 350 (ASGKAADPPSYPAPNPGMMPAPRKKELGGSNSNS) are disordered. Pro residues predominate over residues 325 to 335 (PSYPAPNPGMM). A helical transmembrane segment spans residues 491–511 (LIGLVWSLVSFRWNIQMPSII). At 512–514 (KGS) the chain is on the extracellular side. The helical transmembrane segment at 515–535 (ISILSDAGLGMAMFSLGLFMA) threads the bilayer. The Cytoplasmic portion of the chain corresponds to 536-549 (LQPKIISCGKTVAT). A helical membrane pass occupies residues 550 to 570 (FAMAVRFLTGPAVIAATSIAI). Residues 571–574 (GLRG) are Extracellular-facing. Residues 575–595 (VLLHVAIVQAALPQGIVPFVF) form a helical membrane-spanning segment. Positions 590 and 591 each coordinate (indol-3-yl)acetate. At 596-609 (AKEYNCHPQILSTA) the chain is on the cytoplasmic side. The chain crosses the membrane as a helical span at residues 610–630 (VIFGMLIALPITILYYVLLGI).

This sequence belongs to the auxin efflux carrier (TC 2.A.69.1) family. Homodimer. Expressed in roots, leaves, shoot apex and panicles. Expressed in roots, stem bases and young panicles.

The protein resides in the membrane. Acts as a component of the auxin efflux carrier. Involved in the basipetal polar auxin transport which contributes to the spreading growth of the tillers. The polypeptide is Auxin efflux carrier component 2 (Oryza sativa subsp. japonica (Rice)).